A 492-amino-acid chain; its full sequence is Catalase isozyme 2 (492 aa).

Catalysis depends on residues histidine 65 and asparagine 138. Tyrosine 348 is a binding site for heme.

It belongs to the catalase family. As to quaternary structure, homotetramer. Heme serves as cofactor.

It localises to the peroxisome. It carries out the reaction 2 H2O2 = O2 + 2 H2O. In terms of biological role, occurs in almost all aerobically respiring organisms and serves to protect cells from the toxic effects of hydrogen peroxide. The chain is Catalase isozyme 2 (CAT2) from Gossypium hirsutum (Upland cotton).